The following is a 472-amino-acid chain: GTPase Der (472 aa).

2 EngA-type G domains span residues 3-166 (AVIA…PPAE) and 178-351 (IPVA…AAAH). GTP-binding positions include 9 to 16 (GRPNVGKS), 56 to 60 (DTGGM), 118 to 121 (NKTD), 184 to 191 (GRPNVGKS), 231 to 235 (DTAGV), and 296 to 299 (NKWD). The KH-like domain maps to 352–436 (RDLATPELND…PVRIECRASD (85 aa)). Positions 434–472 (ASDNPFADKPNQLTERQRRRRQRVIHHAKKREKKRKRRR) are disordered. The span at 450–472 (QRRRRQRVIHHAKKREKKRKRRR) shows a compositional bias: basic residues.

The protein belongs to the TRAFAC class TrmE-Era-EngA-EngB-Septin-like GTPase superfamily. EngA (Der) GTPase family. Associates with the 50S ribosomal subunit.

In terms of biological role, GTPase that plays an essential role in the late steps of ribosome biogenesis. This is GTPase Der from Halorhodospira halophila (strain DSM 244 / SL1) (Ectothiorhodospira halophila (strain DSM 244 / SL1)).